We begin with the raw amino-acid sequence, 692 residues long: Hexamerin-1.1 (692 aa).

The N-terminal stretch at 1–18 (MKLLILAVAISLAVLASG) is a signal peptide. N-linked (GlcNAc...) asparagine glycosylation is present at Asn-203.

This sequence belongs to the hemocyanin family. Homohexamer. As to expression, larval fat body.

Its subcellular location is the secreted. It is found in the extracellular space. Functionally, larval storage protein (LSP) which may serve as a store of amino acids for synthesis of adult proteins. This Anopheles gambiae (African malaria mosquito) protein is Hexamerin-1.1 (HexA).